A 642-amino-acid polypeptide reads, in one-letter code: Threonine--tRNA ligase (642 aa).

The 61-residue stretch at 1–61 (MPVITLPDGS…ENDAQLAIIT (61 aa)) folds into the TGS domain. The tract at residues 243–534 (DHRKIGKQLD…LTEEFAGFFP (292 aa)) is catalytic. An N6-acetyllysine modification is found at lysine 286. 3 residues coordinate Zn(2+): cysteine 334, histidine 385, and histidine 511.

Belongs to the class-II aminoacyl-tRNA synthetase family. Homodimer. Zn(2+) is required as a cofactor.

Its subcellular location is the cytoplasm. The catalysed reaction is tRNA(Thr) + L-threonine + ATP = L-threonyl-tRNA(Thr) + AMP + diphosphate + H(+). Catalyzes the attachment of threonine to tRNA(Thr) in a two-step reaction: L-threonine is first activated by ATP to form Thr-AMP and then transferred to the acceptor end of tRNA(Thr). Also edits incorrectly charged L-seryl-tRNA(Thr). This is Threonine--tRNA ligase from Escherichia fergusonii (strain ATCC 35469 / DSM 13698 / CCUG 18766 / IAM 14443 / JCM 21226 / LMG 7866 / NBRC 102419 / NCTC 12128 / CDC 0568-73).